Here is a 475-residue protein sequence, read N- to C-terminus: Ribulose bisphosphate carboxylase large chain (475 aa).

Positions 1–2 are excised as a propeptide; that stretch reads MS. The residue at position 3 (Pro-3) is an N-acetylproline. Lys-14 is subject to N6,N6,N6-trimethyllysine. Substrate is bound by residues Asn-123 and Thr-173. The active-site Proton acceptor is Lys-175. Substrate is bound at residue Lys-177. Positions 201, 203, and 204 each coordinate Mg(2+). N6-carboxylysine is present on Lys-201. His-294 serves as the catalytic Proton acceptor. Residues Arg-295, His-327, and Ser-379 each coordinate substrate.

This sequence belongs to the RuBisCO large chain family. Type I subfamily. In terms of assembly, heterohexadecamer of 8 large chains and 8 small chains; disulfide-linked. The disulfide link is formed within the large subunit homodimers. The cofactor is Mg(2+). In terms of processing, the disulfide bond which can form in the large chain dimeric partners within the hexadecamer appears to be associated with oxidative stress and protein turnover.

The protein resides in the plastid. It localises to the chloroplast. The catalysed reaction is 2 (2R)-3-phosphoglycerate + 2 H(+) = D-ribulose 1,5-bisphosphate + CO2 + H2O. The enzyme catalyses D-ribulose 1,5-bisphosphate + O2 = 2-phosphoglycolate + (2R)-3-phosphoglycerate + 2 H(+). Its function is as follows. RuBisCO catalyzes two reactions: the carboxylation of D-ribulose 1,5-bisphosphate, the primary event in carbon dioxide fixation, as well as the oxidative fragmentation of the pentose substrate in the photorespiration process. Both reactions occur simultaneously and in competition at the same active site. The protein is Ribulose bisphosphate carboxylase large chain of Buxus microphylla (Littleleaf boxwood).